The sequence spans 265 residues: Mlc titration factor A (265 aa).

4 residues coordinate Zn(2+): H111, H148, H152, and E211.

The protein belongs to the MtfA family. As to quaternary structure, interacts with Mlc. Requires Zn(2+) as cofactor.

It localises to the cytoplasm. In terms of biological role, involved in the modulation of the activity of the glucose-phosphotransferase system (glucose-PTS). Interacts with the transcriptional repressor Mlc, preventing its interaction with DNA and leading to the modulation of expression of genes regulated by Mlc, including ptsG, which encodes the PTS system glucose-specific EIICB component. Functionally, shows zinc-dependent metallopeptidase activity. The polypeptide is Mlc titration factor A (Salmonella enteritidis PT4 (strain P125109)).